The sequence spans 1147 residues: Protein lin-41 (1147 aa).

Residues 1-93 (MATIVPCSLE…PPSMIQSPQQ (93 aa)) are disordered. The segment covering 33–47 (SGNELSMGGSSSEGD) has biased composition (low complexity). Basic and acidic residues predominate over residues 48–65 (SMSHHRGEHSPNHHHQDN). The segment covering 84-93 (PPSMIQSPQQ) has biased composition (low complexity). The RING-type zinc-finger motif lies at 114–155 (CSVCSKSSTIGVLPFVCAHKTCQSCYQMTPSSYDRRACKLCG). The B box-type; atypical zinc-finger motif lies at 366 to 412 (MGPIQCQGCESKISFAYCMQCQEALCIHCVQAHQRVRATKQHAFVEL). The Zn(2+) site is built by Cys371, Cys374, Cys394, and His398. The stretch at 565 to 618 (AFDTHVNALEERRKELLKRVETVKNLKLSVLISQAESLQSKQIDLQQAIQTATK) forms a coiled coil. The Filamin repeat unit spans residues 723–817 (ACGDLLSSSI…ISGCPTTMDI (95 aa)). 6 NHL repeats span residues 832–875 (ILTF…FDKD), 879–922 (ISKF…FDEN), 926–969 (LLKF…FTPQ), 974–1017 (RKCG…LSPR), 1022–1065 (MKVY…FASD), and 1107–1147 (SAPT…IRVF). The tract at residues 1104–1123 (AFSSAPTPLTPSPRQLLDRP) is disordered.

Belongs to the TRIM/RBCC family.

Its subcellular location is the cytoplasm. The protein resides in the P-body. Heterochronic protein which acts downstream of let-7 in temporal patterning. Plays a role in the developmental timing of postembryonic hypodermal seam cell division and fusion events and adult alae production. Represses lin-29 during late larval stages, which prevents terminal differentiation of hypodermal seam cells and promotes their division. Involved in post-transcriptional gene regulation, uses two independent pathways. Has direct and specific RNA-binding activity and, depending on the location (5'UTR or 3'UTR) of the target site, triggers either mRNA decay or repression of translation. Degrades the mRNA of transcription factor dmd-3 to govern the timing and extent of male tail tip morphogenesis. Plays a role in the sexual maturation of the nervous system. The polypeptide is Protein lin-41 (Caenorhabditis elegans).